The primary structure comprises 401 residues: Ornithine aminotransferase (401 aa).

The residue at position 258 (Lys258) is an N6-(pyridoxal phosphate)lysine.

The protein belongs to the class-III pyridoxal-phosphate-dependent aminotransferase family. OAT subfamily. The cofactor is pyridoxal 5'-phosphate.

The protein resides in the cytoplasm. It carries out the reaction a 2-oxocarboxylate + L-ornithine = L-glutamate 5-semialdehyde + an L-alpha-amino acid. It participates in amino-acid biosynthesis; L-proline biosynthesis; L-glutamate 5-semialdehyde from L-ornithine: step 1/1. Functionally, catalyzes the interconversion of ornithine to glutamate semialdehyde. This is Ornithine aminotransferase from Bacillus subtilis (strain 168).